The chain runs to 302 residues: Sulfate adenylyltransferase subunit 2 (302 aa).

Belongs to the PAPS reductase family. CysD subfamily. In terms of assembly, heterodimer composed of CysD, the smaller subunit, and CysN.

It catalyses the reaction sulfate + ATP + H(+) = adenosine 5'-phosphosulfate + diphosphate. It functions in the pathway sulfur metabolism; hydrogen sulfide biosynthesis; sulfite from sulfate: step 1/3. Functionally, with CysN forms the ATP sulfurylase (ATPS) that catalyzes the adenylation of sulfate producing adenosine 5'-phosphosulfate (APS) and diphosphate, the first enzymatic step in sulfur assimilation pathway. APS synthesis involves the formation of a high-energy phosphoric-sulfuric acid anhydride bond driven by GTP hydrolysis by CysN coupled to ATP hydrolysis by CysD. The sequence is that of Sulfate adenylyltransferase subunit 2 from Baumannia cicadellinicola subsp. Homalodisca coagulata.